A 924-amino-acid polypeptide reads, in one-letter code: Cell division control protein 13 (924 aa).

The tract at residues 265 to 336 (PTTDISNMGE…KRKRKLSFHS (72 aa)) is disordered. Residues 295–308 (GKYFSSKSYIQSQT) are compositionally biased toward polar residues. S306 carries the post-translational modification Phosphoserine. T308 carries the post-translational modification Phosphothreonine. Residues 309–326 (PERKTSVPNNWHDDDSGS) show a composition bias toward basic and acidic residues. At S333 the chain carries Phosphoserine. The OB DNA-binding region spans 500–686 (KMARKDPTIE…FEEYRRFFPI (187 aa)).

In terms of assembly, interacts with POL1, EST1, FUN12, STM1, STN1 and TEN1.

The protein localises to the chromosome. Its subcellular location is the telomere. In terms of biological role, single-stranded telomeric DNA-binding protein that regulates telomere replication. Has a role in both positive and negative regulation. Promotes [TG(1-3)] strand lengthening via interaction with EST1. Promotes [C(1-3)A] strand re-synthesis by DNA polymerase alpha via interaction with POL1. Negatively regulates telomere elongation of the G strand via binding with STN1 thereby inhibiting telomerase activity. This Saccharomyces cerevisiae (strain ATCC 204508 / S288c) (Baker's yeast) protein is Cell division control protein 13 (CDC13).